The chain runs to 254 residues: Ubiquinone/menaquinone biosynthesis C-methyltransferase UbiE (254 aa).

Residues T77, D98, 126-127, and S143 each bind S-adenosyl-L-methionine; that span reads DA.

The protein belongs to the class I-like SAM-binding methyltransferase superfamily. MenG/UbiE family.

The enzyme catalyses a 2-demethylmenaquinol + S-adenosyl-L-methionine = a menaquinol + S-adenosyl-L-homocysteine + H(+). It carries out the reaction a 2-methoxy-6-(all-trans-polyprenyl)benzene-1,4-diol + S-adenosyl-L-methionine = a 5-methoxy-2-methyl-3-(all-trans-polyprenyl)benzene-1,4-diol + S-adenosyl-L-homocysteine + H(+). The protein operates within quinol/quinone metabolism; menaquinone biosynthesis; menaquinol from 1,4-dihydroxy-2-naphthoate: step 2/2. Its pathway is cofactor biosynthesis; ubiquinone biosynthesis. Functionally, methyltransferase required for the conversion of demethylmenaquinol (DMKH2) to menaquinol (MKH2) and the conversion of 2-polyprenyl-6-methoxy-1,4-benzoquinol (DDMQH2) to 2-polyprenyl-3-methyl-6-methoxy-1,4-benzoquinol (DMQH2). The polypeptide is Ubiquinone/menaquinone biosynthesis C-methyltransferase UbiE (Blochmanniella pennsylvanica (strain BPEN)).